The primary structure comprises 435 residues: Cyclin-dependent kinase 14 (435 aa).

Polar residues predominate over residues 75 to 92 (RTQSSFDPFEKTSNQPTS). Residues 75 to 97 (RTQSSFDPFEKTSNQPTSPKFGK) are disordered. The Protein kinase domain occupies 101-385 (YEKLEKLGEG…AQAALNHDYF (285 aa)). Residues 107–115 (LGEGSYATV) and K130 each bind ATP. Catalysis depends on D222, which acts as the Proton acceptor.

It belongs to the protein kinase superfamily. CMGC Ser/Thr protein kinase family. CDC2/CDKX subfamily. In terms of assembly, interacts with ccny; ccny mediates its recruitment to the plasma membrane and promotes phosphorylation of lrp6.

The protein resides in the cell membrane. It carries out the reaction L-seryl-[protein] + ATP = O-phospho-L-seryl-[protein] + ADP + H(+). The enzyme catalyses L-threonyl-[protein] + ATP = O-phospho-L-threonyl-[protein] + ADP + H(+). Functionally, serine/threonine-protein kinase involved in the control of the eukaryotic cell cycle, whose activity is controlled by an associated cyclin. Acts as a cell-cycle regulator of Wnt signaling pathway during G2/M phase by mediating the phosphorylation of lrp6, leading to the activation of the Wnt signaling pathway. This chain is Cyclin-dependent kinase 14 (cdk14), found in Xenopus laevis (African clawed frog).